The sequence spans 324 residues: Beta-ketoacyl-[acyl-carrier-protein] synthase III (324 aa).

Active-site residues include C114 and H246. An ACP-binding region spans residues 247-251 (QANLR). Residue N276 is part of the active site.

Belongs to the thiolase-like superfamily. FabH family. Homodimer.

It is found in the cytoplasm. The catalysed reaction is malonyl-[ACP] + acetyl-CoA + H(+) = 3-oxobutanoyl-[ACP] + CO2 + CoA. Its pathway is lipid metabolism; fatty acid biosynthesis. In terms of biological role, catalyzes the condensation reaction of fatty acid synthesis by the addition to an acyl acceptor of two carbons from malonyl-ACP. Catalyzes the first condensation reaction which initiates fatty acid synthesis and may therefore play a role in governing the total rate of fatty acid production. Possesses both acetoacetyl-ACP synthase and acetyl transacylase activities. Its substrate specificity determines the biosynthesis of branched-chain and/or straight-chain of fatty acids. This Campylobacter jejuni subsp. jejuni serotype O:2 (strain ATCC 700819 / NCTC 11168) protein is Beta-ketoacyl-[acyl-carrier-protein] synthase III.